A 121-amino-acid chain; its full sequence is Structural protein p14.5 (121 aa).

Disordered regions lie at residues 1–24 (MADF…IGSL) and 84–121 (TSLV…HKSK). The residue at position 2 (Ala-2) is an N-acetylalanine; by host. The segment covering 104 to 121 (KPKKKKHLFPKLSSHKSK) has biased composition (basic residues).

This sequence belongs to the asfivirus structural protein p14.5 family. As to quaternary structure, interacts with the major capsid protein. Interacts with host IRF3; this interaction interferes with the recruitment of IRF3 to TBK1. In terms of processing, acetylated.

It localises to the virion. Its function is as follows. Structural protein required for transport of intracellular particles from the assembly sites to the plasma membrane. Binds to both ssDNA and dsDNA. Suppressed the activation of the cGAS/STING pathway by interfering with the recruitment of IRF3 to TBK1, which in turn suppresses IRF3 phosphorylation, decreasing interferon production. This is Structural protein p14.5 from Ornithodoros (relapsing fever ticks).